The sequence spans 160 residues: SsrA-binding protein (160 aa).

The segment at 132-160 (KEFDKRDTVRERDSNRELQRTMRNKGKEE) is disordered.

The protein belongs to the SmpB family.

Its subcellular location is the cytoplasm. Functionally, required for rescue of stalled ribosomes mediated by trans-translation. Binds to transfer-messenger RNA (tmRNA), required for stable association of tmRNA with ribosomes. tmRNA and SmpB together mimic tRNA shape, replacing the anticodon stem-loop with SmpB. tmRNA is encoded by the ssrA gene; the 2 termini fold to resemble tRNA(Ala) and it encodes a 'tag peptide', a short internal open reading frame. During trans-translation Ala-aminoacylated tmRNA acts like a tRNA, entering the A-site of stalled ribosomes, displacing the stalled mRNA. The ribosome then switches to translate the ORF on the tmRNA; the nascent peptide is terminated with the 'tag peptide' encoded by the tmRNA and targeted for degradation. The ribosome is freed to recommence translation, which seems to be the essential function of trans-translation. The protein is SsrA-binding protein of Pseudomonas entomophila (strain L48).